The primary structure comprises 612 residues: uncharacterized protein (612 aa).

The zn(2)-C6 fungal-type DNA-binding region spans 6–32 (CLYCRRRKIKCDKNRPCHNCFVAKREC).

The protein resides in the cytoplasm. It localises to the nucleus. This is an uncharacterized protein from Schizosaccharomyces pombe (strain 972 / ATCC 24843) (Fission yeast).